Reading from the N-terminus, the 273-residue chain is Dermonecrotic toxin LhSicTox-alphaIA1i (273 aa).

His-5 is an active-site residue. Glu-25 and Asp-27 together coordinate Mg(2+). His-41 serves as the catalytic Nucleophile. Disulfide bonds link Cys-45/Cys-51 and Cys-47/Cys-190. Residue Asp-85 coordinates Mg(2+).

This sequence belongs to the arthropod phospholipase D family. Class II subfamily. Mg(2+) is required as a cofactor. As to expression, expressed by the venom gland.

The protein resides in the secreted. It carries out the reaction an N-(acyl)-sphingosylphosphocholine = an N-(acyl)-sphingosyl-1,3-cyclic phosphate + choline. It catalyses the reaction an N-(acyl)-sphingosylphosphoethanolamine = an N-(acyl)-sphingosyl-1,3-cyclic phosphate + ethanolamine. The enzyme catalyses a 1-acyl-sn-glycero-3-phosphocholine = a 1-acyl-sn-glycero-2,3-cyclic phosphate + choline. The catalysed reaction is a 1-acyl-sn-glycero-3-phosphoethanolamine = a 1-acyl-sn-glycero-2,3-cyclic phosphate + ethanolamine. Its function is as follows. Dermonecrotic toxins cleave the phosphodiester linkage between the phosphate and headgroup of certain phospholipids (sphingolipid and lysolipid substrates), forming an alcohol (often choline) and a cyclic phosphate. This toxin acts on sphingomyelin (SM). It may also act on ceramide phosphoethanolamine (CPE), lysophosphatidylcholine (LPC) and lysophosphatidylethanolamine (LPE), but not on lysophosphatidylserine (LPS), and lysophosphatidylglycerol (LPG). It acts by transphosphatidylation, releasing exclusively cyclic phosphate products as second products. Induces dermonecrosis, hemolysis, increased vascular permeability, edema, inflammatory response, and platelet aggregation. The sequence is that of Dermonecrotic toxin LhSicTox-alphaIA1i from Loxosceles hirsuta (Recluse spider).